A 365-amino-acid polypeptide reads, in one-letter code: Aminomethyltransferase (365 aa).

It belongs to the GcvT family. The glycine cleavage system is composed of four proteins: P, T, L and H.

The enzyme catalyses N(6)-[(R)-S(8)-aminomethyldihydrolipoyl]-L-lysyl-[protein] + (6S)-5,6,7,8-tetrahydrofolate = N(6)-[(R)-dihydrolipoyl]-L-lysyl-[protein] + (6R)-5,10-methylene-5,6,7,8-tetrahydrofolate + NH4(+). Functionally, the glycine cleavage system catalyzes the degradation of glycine. The polypeptide is Aminomethyltransferase (Chlorobaculum tepidum (strain ATCC 49652 / DSM 12025 / NBRC 103806 / TLS) (Chlorobium tepidum)).